A 377-amino-acid polypeptide reads, in one-letter code: Glutamate 5-kinase (377 aa).

Lysine 18 serves as a coordination point for ATP. The substrate site is built by serine 55, aspartate 142, and asparagine 154. ATP contacts are provided by residues 174–175 (SD) and 216–222 (TGGMKSK). A PUA domain is found at 281–359 (QGEVVVDAGA…REIEALLGYK (79 aa)).

Belongs to the glutamate 5-kinase family.

It is found in the cytoplasm. It carries out the reaction L-glutamate + ATP = L-glutamyl 5-phosphate + ADP. It participates in amino-acid biosynthesis; L-proline biosynthesis; L-glutamate 5-semialdehyde from L-glutamate: step 1/2. In terms of biological role, catalyzes the transfer of a phosphate group to glutamate to form L-glutamate 5-phosphate. This Meiothermus ruber protein is Glutamate 5-kinase.